The sequence spans 1165 residues: Error-prone DNA polymerase (1165 aa).

Residues 1111–1165 are disordered; the sequence is SEGLARPPLPTGADLYEPLTYEPLNGDRRDNPDAPAQRLRHPRDVRILPPSRDFH. Positions 1152 to 1165 are enriched in basic and acidic residues; the sequence is PRDVRILPPSRDFH.

The protein belongs to the DNA polymerase type-C family. DnaE2 subfamily.

The protein resides in the cytoplasm. It catalyses the reaction DNA(n) + a 2'-deoxyribonucleoside 5'-triphosphate = DNA(n+1) + diphosphate. Its function is as follows. DNA polymerase involved in damage-induced mutagenesis and translesion synthesis (TLS). It is not the major replicative DNA polymerase. The polypeptide is Error-prone DNA polymerase (Rhodopseudomonas palustris (strain HaA2)).